Reading from the N-terminus, the 20-residue chain is Tetracycline resistance leader peptide (20 aa).

Residues Met-1–Leu-20 form a disordered region.

This Bacillus subtilis (strain 168) protein is Tetracycline resistance leader peptide (tetL).